The chain runs to 101 residues: Small ribosomal subunit protein uS14 (101 aa).

This sequence belongs to the universal ribosomal protein uS14 family. In terms of assembly, part of the 30S ribosomal subunit. Contacts proteins S3 and S10.

In terms of biological role, binds 16S rRNA, required for the assembly of 30S particles and may also be responsible for determining the conformation of the 16S rRNA at the A site. The chain is Small ribosomal subunit protein uS14 from Vibrio vulnificus (strain CMCP6).